The following is a 132-amino-acid chain: Fluoride-specific ion channel FluC (132 aa).

A run of 4 helical transmembrane segments spans residues 6–26, 41–61, 73–93, and 104–124; these read VLQL…RFIV, GTLV…ILMI, FLIV…FETY, and AMLN…LGIW. Na(+) is bound by residues G80 and T83.

This sequence belongs to the fluoride channel Fluc/FEX (TC 1.A.43) family.

The protein localises to the cell inner membrane. The catalysed reaction is fluoride(in) = fluoride(out). Its activity is regulated as follows. Na(+) is not transported, but it plays an essential structural role and its presence is essential for fluoride channel function. Fluoride-specific ion channel. Important for reducing fluoride concentration in the cell, thus reducing its toxicity. This chain is Fluoride-specific ion channel FluC, found in Hydrogenovibrio crunogenus (strain DSM 25203 / XCL-2) (Thiomicrospira crunogena).